The chain runs to 1105 residues: Ran-binding protein 6 (1105 aa).

Alanine 2 carries the post-translational modification N-acetylalanine. HEAT repeat units lie at residues 219-257, 361-399, 402-440, 444-483, 866-905, 908-946, and 949-987; these read FKDF…TVPK, KVVL…GCHQ, EPIL…DFAP, KKFH…DCPK, LPWF…HCSP, FKYV…FGGD, and RSLC…IGKI.

The protein belongs to the importin beta family.

Its subcellular location is the cytoplasm. The protein resides in the nucleus. Its function is as follows. May function in nuclear protein import as nuclear transport receptor. This is Ran-binding protein 6 (Ranbp6) from Mus musculus (Mouse).